A 360-amino-acid chain; its full sequence is SPRY domain-containing SOCS box protein 3 (360 aa).

The tract at residues Asp21–Leu54 is disordered. Positions Ser84–Arg274 constitute a B30.2/SPRY domain. The SOCS box domain occupies Ser264–Trp315. Positions Asn322–Asp350 are disordered. Residues Ser332–Thr346 are compositionally biased toward polar residues.

It belongs to the SPSB family. As to quaternary structure, substrate-recognition component of the ECS(SPSB3) complex, composed of spsb3, cul5, elob, elob and rnf7/rbx2.

It is found in the nucleus. It functions in the pathway protein modification; protein ubiquitination. In terms of biological role, substrate-recognition component of a cullin-5-RING E3 ubiquitin-protein ligase complex (ECS complex, also named CRL5 complex), which mediates the ubiquitination and subsequent proteasomal degradation of target proteins. This is SPRY domain-containing SOCS box protein 3 (spsb3) from Xenopus laevis (African clawed frog).